Consider the following 534-residue polypeptide: High affinity cGMP-specific 3',5'-cyclic phosphodiesterase 9A (534 aa).

The 322-residue stretch at 175 to 496 (PRRDVPTYPK…EHYEELKQLD (322 aa)) folds into the PDEase domain. The active-site Proton donor is the H251. 251–255 (HNFRH) lines the 3',5'-cyclic GMP pocket. Zn(2+) contacts are provided by H255, H291, and D292. Position 292 (D292) interacts with 3',5'-cyclic GMP. D292 serves as a coordination point for Mg(2+). At S318 the chain carries Phosphoserine. Residues D401, Y423, and 451–452 (AQ) contribute to the 3',5'-cyclic GMP site. D401 is a Zn(2+) binding site. Residues 500–534 (KELQKKTESLTSGAPENTTEKNRDAKDSEGHSPPN) form a disordered region. Basic and acidic residues predominate over residues 517-534 (TTEKNRDAKDSEGHSPPN).

The protein belongs to the cyclic nucleotide phosphodiesterase family. PDE9 subfamily. Homodimer. The cofactor is Zn(2+). Mg(2+) serves as cofactor. As to expression, highly expressed in kidney. Lower levels in liver, lung and brain. Widely expressed in brain, with highest expression in cerebellar Purkinje cells. Present in heart (at protein level).

It localises to the cell projection. The protein localises to the ruffle membrane. The protein resides in the cytoplasm. Its subcellular location is the perinuclear region. It is found in the golgi apparatus. It localises to the endoplasmic reticulum. The protein localises to the cell membrane. The protein resides in the sarcolemma. It carries out the reaction 3',5'-cyclic GMP + H2O = GMP + H(+). Its pathway is purine metabolism; 3',5'-cyclic GMP degradation; GMP from 3',5'-cyclic GMP: step 1/1. Inhibited by SCH 51866 and moderately, by zaprinast. Specifically inhibited by PF-04447943 (6-[(3S,4S)-4-methyl-1-(pyrimidin-2-ylmethyl)pyrrolidin-3-yl]-1-(tetrahydro-2H-pyran-4-yl)-1,5-dihydro-4H-pyrazolo[3,4-d]pyrimidin-4-one). Functionally, specifically hydrolyzes the second messenger cGMP, which is a key regulator of many important physiological processes. Highly specific: compared to other members of the cyclic nucleotide phosphodiesterase family, has the highest affinity and selectivity for cGMP. Specifically regulates natriuretic-peptide-dependent cGMP signaling in heart, acting as a regulator of cardiac hypertrophy in myocytes and muscle. Does not regulate nitric oxide-dependent cGMP in heart. Additional experiments are required to confirm whether its ability to hydrolyze natriuretic-peptide-dependent cGMP is specific to heart or is a general feature of the protein. In brain, involved in cognitive function, such as learning and long-term memory. This Mus musculus (Mouse) protein is High affinity cGMP-specific 3',5'-cyclic phosphodiesterase 9A (Pde9a).